A 436-amino-acid chain; its full sequence is Ribulose bisphosphate carboxylase large chain (436 aa).

Positions 104 and 154 each coordinate substrate. K156 (proton acceptor) is an active-site residue. K158 contributes to the substrate binding site. Mg(2+)-binding residues include K182, D184, and E185. Residue K182 is modified to N6-carboxylysine. Catalysis depends on H275, which acts as the Proton acceptor. Positions 276, 308, and 360 each coordinate substrate.

This sequence belongs to the RuBisCO large chain family. Type I subfamily. As to quaternary structure, heterohexadecamer of 8 large chains and 8 small chains. Requires Mg(2+) as cofactor.

It localises to the plastid. It is found in the chloroplast. It catalyses the reaction 2 (2R)-3-phosphoglycerate + 2 H(+) = D-ribulose 1,5-bisphosphate + CO2 + H2O. The enzyme catalyses D-ribulose 1,5-bisphosphate + O2 = 2-phosphoglycolate + (2R)-3-phosphoglycerate + 2 H(+). Functionally, ruBisCO catalyzes two reactions: the carboxylation of D-ribulose 1,5-bisphosphate, the primary event in carbon dioxide fixation, as well as the oxidative fragmentation of the pentose substrate in the photorespiration process. Both reactions occur simultaneously and in competition at the same active site. In Euglena viridis (Cercaria viridis), this protein is Ribulose bisphosphate carboxylase large chain.